Reading from the N-terminus, the 522-residue chain is Serine/threonine-protein kinase BSK1-2 (522 aa).

A disordered region spans residues 1-54 (MGCCGSSLRVGSHAPEKPPRRARPPPPPPQPHHPRRPSFTLNAHQAAASSSAAS). The N-myristoyl glycine moiety is linked to residue G2. The Protein kinase domain occupies 79–338 (ANIVSESGEK…KLVSILQPLQ (260 aa)). Residues 85 to 93 (SGEKAPNLV) and K111 each bind ATP. Residue D205 is the Proton acceptor of the active site.

The protein belongs to the protein kinase superfamily. Ser/Thr protein kinase family.

Its subcellular location is the cell membrane. It carries out the reaction L-seryl-[protein] + ATP = O-phospho-L-seryl-[protein] + ADP + H(+). The catalysed reaction is L-threonyl-[protein] + ATP = O-phospho-L-threonyl-[protein] + ADP + H(+). Probable serine/threonine kinase that functions as a positive regulator of plant immunity. May be involved in the regulation of pattern-triggered immunity (PTI). Does not seem to be involved in responses to brassinosteroid (BR) signaling. This Oryza sativa subsp. japonica (Rice) protein is Serine/threonine-protein kinase BSK1-2.